The primary structure comprises 449 residues: CCAAT/enhancer-binding protein (449 aa).

3 disordered regions span residues His-211 to Glu-233, Gly-276 to Gln-302, and Ser-334 to Val-386. Composition is skewed to low complexity over residues Asn-215–Ser-229, Asn-280–Ser-301, and Gln-339–Gln-349. Over residues Lys-357–Arg-368 the composition is skewed to basic and acidic residues. Residues Thr-363–Leu-426 enclose the bZIP domain. A basic motif region spans residues Arg-367–Lys-396. Residues Leu-398–Leu-405 form a leucine-zipper region.

This sequence belongs to the bZIP family. C/EBP subfamily. As to quaternary structure, binds DNA as a dimer and can form stable heterodimers. Interacts with trbl. Ubiquitination/deubiquitination regulates border cell migration. Ubiquitination is stimulated by trbl, which leads to proteasomal degradation and inhibits border cell migration. Deubiquitination by Usp47, leads to its stabilization and promotes border cell migration.

It is found in the nucleus. Required for the expression of gene products mediating border cell migration. Among the DNA sequences that this protein binds with high affinity is a conserved site within the promoter of its gene. This chain is CCAAT/enhancer-binding protein (slbo), found in Drosophila melanogaster (Fruit fly).